The following is a 119-amino-acid chain: Ribosome-binding factor A (119 aa).

The protein belongs to the RbfA family. Monomer. Binds 30S ribosomal subunits, but not 50S ribosomal subunits or 70S ribosomes.

It is found in the cytoplasm. Its function is as follows. One of several proteins that assist in the late maturation steps of the functional core of the 30S ribosomal subunit. Associates with free 30S ribosomal subunits (but not with 30S subunits that are part of 70S ribosomes or polysomes). Required for efficient processing of 16S rRNA. May interact with the 5'-terminal helix region of 16S rRNA. The sequence is that of Ribosome-binding factor A from Coxiella burnetii (strain CbuG_Q212) (Coxiella burnetii (strain Q212)).